The chain runs to 449 residues: Probable multidrug resistance protein NorM (449 aa).

The next 12 helical transmembrane spans lie at L17–A39, V54–A76, V97–L119, A129–G151, V164–P186, G196–Y215, L243–L265, M280–G302, L315–F337, V352–M369, M390–A412, and A417–Y439.

This sequence belongs to the multi antimicrobial extrusion (MATE) (TC 2.A.66.1) family.

Its subcellular location is the cell inner membrane. Functionally, multidrug efflux pump. The protein is Probable multidrug resistance protein NorM (norM) of Acinetobacter baylyi (strain ATCC 33305 / BD413 / ADP1).